Here is a 252-residue protein sequence, read N- to C-terminus: Imidazole glycerol phosphate synthase subunit HisF (252 aa).

Residues D11 and D130 contribute to the active site.

The protein belongs to the HisA/HisF family. In terms of assembly, heterodimer of HisH and HisF.

The protein resides in the cytoplasm. The catalysed reaction is 5-[(5-phospho-1-deoxy-D-ribulos-1-ylimino)methylamino]-1-(5-phospho-beta-D-ribosyl)imidazole-4-carboxamide + L-glutamine = D-erythro-1-(imidazol-4-yl)glycerol 3-phosphate + 5-amino-1-(5-phospho-beta-D-ribosyl)imidazole-4-carboxamide + L-glutamate + H(+). Its pathway is amino-acid biosynthesis; L-histidine biosynthesis; L-histidine from 5-phospho-alpha-D-ribose 1-diphosphate: step 5/9. In terms of biological role, IGPS catalyzes the conversion of PRFAR and glutamine to IGP, AICAR and glutamate. The HisF subunit catalyzes the cyclization activity that produces IGP and AICAR from PRFAR using the ammonia provided by the HisH subunit. In Bacillus mycoides (strain KBAB4) (Bacillus weihenstephanensis), this protein is Imidazole glycerol phosphate synthase subunit HisF.